Here is a 411-residue protein sequence, read N- to C-terminus: MQTSEREGSGPELSPSVMPEAPLESPPFPTKSPAFDLFNLVLSYKRLEIYLEPLKDAGDGVRYLLRWQMPLCSLLTCLGLNVLFLTLNEGAWYSVGALMISVPALLGYLQEVCRARLPDSELMRRKYHSVRQEDLQRGRLSRPEAVAEVKSFLIQLEAFLSRLCCTCEAAYRVLHWENPVVSSQFYGALLGTVCMLYLLPLCWVLTLLNSTLFLGNVEFFRVVSEYRASLQQRMNPKQEEHAFESPPPPDVGGKDGLMDSTPALTPTEDLTPGSVEEAEEAEPDEEFKDAIEETHLVVLEDDEGAPCPAEDELALQDNGFLSKNEVLRSKVSRLTERLRKRYPTNNFGNCTGCSATFSVLKKRRSCSNCGNSFCSRCCSFKVPKSSMGATAPEAQRETVFVCASCNQTLSK.

The segment at 1 to 27 (MQTSEREGSGPELSPSVMPEAPLESPP) is disordered. Topologically, residues 1-66 (MQTSEREGSG…AGDGVRYLLR (66 aa)) are cytoplasmic. Residues 1-92 (MQTSEREGSG…LFLTLNEGAW (92 aa)) are sufficient for homooligomerization. The segment at 1–205 (MQTSEREGSG…LYLLPLCWVL (205 aa)) is sufficient for localization to endoplasmic reticulum tubular network and for interactions with REEP1, REEP5, ATL1, ATL2, ATL3 and SPAST. Positions 51–64 (LEPLKDAGDGVRYL) are necessary for interaction with RAB11A and function in neurite outgrowth. Residues 67–87 (WQMPLCSLLTCLGLNVLFLTL) form a helical membrane-spanning segment. N88 is a topological domain (lumenal). The chain crosses the membrane as a helical span at residues 89-109 (EGAWYSVGALMISVPALLGYL). At 110 to 187 (QEVCRARLPD…NPVVSSQFYG (78 aa)) the chain is on the cytoplasmic side. An intramembrane region (helical) is located at residues 188-208 (ALLGTVCMLYLLPLCWVLTLL). Topologically, residues 209 to 411 (NSTLFLGNVE…CASCNQTLSK (203 aa)) are cytoplasmic. A disordered region spans residues 234–286 (MNPKQEEHAFESPPPPDVGGKDGLMDSTPALTPTEDLTPGSVEEAEEAEPDEE). Residues 271–361 (TPGSVEEAEE…GCSATFSVLK (91 aa)) are necessary for interaction with KIF5A. The segment covering 276–286 (EEAEEAEPDEE) has biased composition (acidic residues). The segment at 286 to 292 (EFKDAIE) is necessary for interaction with VAPA and function in cell projections formation. The FYVE-type zinc-finger motif lies at 344 to 410 (TNNFGNCTGC…VCASCNQTLS (67 aa)). Residues C350, C353, C366, C369, C374, C377, C402, and C405 each coordinate Zn(2+).

As to quaternary structure, can form homooligomers (monomers, dimers and tetramers). Interacts with RAB11A (GDP-bound form); regulates RAB11A. Interacts with FKBP8; may negatively regulate ZFYVE27 phosphorylation. Interacts with VAPA (via MSP domain); may regulate ZFYVE27 retention in the endoplasmic reticulum and its function in cell projections formation. Interacts with VAPB (via MSP domain). Interacts with REEP1, REEP5 and ATL1. Interacts with ATL2, ATL3 and SPAST. Interacts with KIF5A and RTN3. Interacts with RAB11B (GDP-bound form), SURF4, KIF5B and KIF5C. In terms of processing, phosphorylated. Phosphorylation is induced by NGF through the MAPK/ERK pathway and modulates interaction with RAB11A.

The protein localises to the recycling endosome membrane. It localises to the endoplasmic reticulum membrane. The protein resides in the cell projection. It is found in the growth cone membrane. Key regulator of RAB11-dependent vesicular trafficking during neurite extension through polarized membrane transport. Promotes axonal elongation and contributes to the establishment of neuronal cell polarity. Involved in nerve growth factor-induced neurite formation in VAPA-dependent manner. Contributes to both the formation and stabilization of the tubular ER network. Involved in ER morphogenesis by regulating the sheet-to-tubule balance and possibly the density of tubule interconnections. Acts as an adapter protein and facilitates the interaction of KIF5A with VAPA, VAPB, SURF4, RAB11A, RAB11B and RTN3 and the ZFYVE27-KIF5A complex contributes to the transport of these proteins in neurons. Can induce formation of neurite-like membrane protrusions in non-neuronal cells in a KIF5A/B-dependent manner. This Homo sapiens (Human) protein is Protrudin (ZFYVE27).